We begin with the raw amino-acid sequence, 63 residues long: Large ribosomal subunit protein bL35 (63 aa).

The interval 26-50 is disordered; it reads GSGMRHNLEHKSARKRRALKRDDVL.

Belongs to the bacterial ribosomal protein bL35 family.

In Bifidobacterium animalis subsp. lactis (strain AD011), this protein is Large ribosomal subunit protein bL35.